Here is a 191-residue protein sequence, read N- to C-terminus: Small ribosomal subunit protein uS5 (191 aa).

Residues 20–83 (FADRLVAINR…EQAKRQMIRV (64 aa)) enclose the S5 DRBM domain. The interval 158-191 (TSPRMVAQRRGKKVSDILKKDGEPAEAAAEPAEA) is disordered. The segment covering 170-180 (KVSDILKKDGE) has biased composition (basic and acidic residues). The segment covering 182-191 (AEAAAEPAEA) has biased composition (low complexity).

Belongs to the universal ribosomal protein uS5 family. As to quaternary structure, part of the 30S ribosomal subunit. Contacts proteins S4 and S8.

In terms of biological role, with S4 and S12 plays an important role in translational accuracy. Functionally, located at the back of the 30S subunit body where it stabilizes the conformation of the head with respect to the body. The sequence is that of Small ribosomal subunit protein uS5 from Dinoroseobacter shibae (strain DSM 16493 / NCIMB 14021 / DFL 12).